The chain runs to 234 residues: Cysteine proteinase inhibitor 6 (234 aa).

A signal peptide spans 1–24 (MMRSRFLLFIVFFSLSLFISSLIA). Methionine 2 bears the N-acetylalanine mark. 2 consecutive Cystatin domains span residues 38–126 (GGVG…KPAS) and 145–215 (SGWR…FKVE). Residues 82–86 (QVVAG) carry the Secondary area of contact motif. The disordered stretch occupies residues 133 to 154 (SSDLGCKQGEHESGWREVPGDD). A compositionally biased stretch (basic and acidic residues) spans 140 to 154 (QGEHESGWREVPGDD). Phosphoserine is present on serine 174.

Belongs to the cystatin family. Phytocystatin subfamily.

The protein localises to the secreted. In terms of biological role, specific inhibitor of cysteine proteinases. Probably involved in the regulation of endogenous processes and in defense against pests and pathogens. The sequence is that of Cysteine proteinase inhibitor 6 (CYS6) from Arabidopsis thaliana (Mouse-ear cress).